The chain runs to 710 residues: Amyloid beta precursor protein binding family B member 1 (710 aa).

Phosphoserine is present on Ser-135. Disordered stretches follow at residues 143-256 and 276-300; these read EQGP…SDLP and GTTQ…ESQL. Positions 145 to 173 are enriched in acidic residues; it reads GPDEGEEKAAGEAEEDDEDEEEEEEEEDL. At Lys-204 the chain carries N6-acetyllysine. Residues 223–234 show a composition bias toward polar residues; the sequence is SWATLSQGSPSY. The region spanning 253 to 285 is the WW domain; the sequence is SDLPAGWMRVQDTSGTYYWHIPTGTTQWEPPGR. The segment covering 287-299 has biased composition (low complexity); sequence SPSQGSSPQEESQ. The 140-residue stretch at 370–509 folds into the PID 1 domain; it reads FAVRSLGWVE…SKIMSERRNA (140 aa). The residue at position 459 (Ser-459) is a Phosphoserine; by PKC. Ser-517 is modified (phosphoserine). Residues 542-699 form the PID 2 domain; that stretch reads KFQVYYLGNV…RRGVQSLWGS (158 aa). Phosphotyrosine; by ABL1 is present on Tyr-547. Ser-610 carries the post-translational modification Phosphoserine; by SGK1. At Lys-701 the chain carries N6-acetyllysine.

Component of a complex, at least composed of APBB1, RASD1/DEXRAS1 and APP. Interacts (via PID domain 2) with APP (with the intracellular domain of the amyloid-beta precursor protein). Interacts (via PID domain 2) with RASD1/DEXRAS1; impairs the transcription activation activity. Interacts (via PID domain 1) with KAT5/TIP60. Interacts (via the WW domain) with the proline-rich region of APBB1IP. Interacts with TSHZ1 and TSHZ2. Interacts (via the WW domain) with histone H2AX (when phosphorylated on 'Tyr-142') and the proline-rich region of ENAH. Interacts with MAPK8. Interacts (via PID domain 1) with TSHZ3 (via homeobox domain). Interacts with SET. Found in a trimeric complex with HDAC1 and TSHZ3; the interaction between HDAC1 and APBB1 is mediated by TSHZ3. Interacts (via WWW domain) with NEK6. Interacts (via WWW domain) with ABL1. Interacts with RNF157. Interacts with ARF6. Post-translationally, polyubiquitination by RNF157 leads to degradation by the proteasome. In terms of processing, phosphorylation at Ser-610 by SGK1 promotes its localization to the nucleus. Phosphorylated following nuclear translocation. Phosphorylation at Tyr-546 by ABL1 enhances transcriptional activation activity and reduces the affinity for RASD1/DEXRAS1. Acetylation at Lys-204 and Lys-701 by KAT5 promotes its transcription activator activity. Phosphorylated at Ser-459 by PKC upon insulin activation. In terms of tissue distribution, expressed in the brain, retinal lens and muscle cells (at protein level).

Its subcellular location is the cell membrane. The protein localises to the cytoplasm. It is found in the nucleus. It localises to the cell projection. The protein resides in the growth cone. Its subcellular location is the nucleus speckle. In terms of biological role, transcription coregulator that can have both coactivator and corepressor functions. Adapter protein that forms a transcriptionally active complex with the gamma-secretase-derived amyloid precursor protein (APP) intracellular domain. Plays a central role in the response to DNA damage by translocating to the nucleus and inducing apoptosis. May act by specifically recognizing and binding histone H2AX phosphorylated on 'Tyr-142' (H2AXY142ph) at double-strand breaks (DSBs), recruiting other pro-apoptosis factors such as MAPK8/JNK1. Required for histone H4 acetylation at double-strand breaks (DSBs). Its ability to specifically bind modified histones and chromatin modifying enzymes such as KAT5/TIP60, probably explains its transcription activation activity. Functions in association with TSHZ3, SET and HDAC factors as a transcriptional repressor, that inhibits the expression of CASP4. Associates with chromatin in a region surrounding the CASP4 transcriptional start site(s). Involved in hippocampal neurite branching and neuromuscular junction formation, as a result plays a role in spatial memory functioning. Plays a role in the maintenance of lens transparency. May play a role in muscle cell strength. Acts as a molecular adapter that functions in neurite outgrowth by activating the RAC1-ARF6 axis upon insulin treatment. This Mus musculus (Mouse) protein is Amyloid beta precursor protein binding family B member 1.